Consider the following 735-residue polypeptide: Catalase-peroxidase (735 aa).

Positions 95-223 form a cross-link, tryptophyl-tyrosyl-methioninium (Trp-Tyr) (with M-249); the sequence is WHSAGTYRTG…LAAVQMGLIY (129 aa). Residue His96 is the Proton acceptor of the active site. A cross-link (tryptophyl-tyrosyl-methioninium (Tyr-Met) (with W-95)) is located at residues 223–249; the sequence is YVNPEGPDGVPDPIKSGIDIRETFARM. His264 serves as a coordination point for heme b.

The protein belongs to the peroxidase family. Peroxidase/catalase subfamily. As to quaternary structure, homodimer or homotetramer. Heme b serves as cofactor. In terms of processing, formation of the three residue Trp-Tyr-Met cross-link is important for the catalase, but not the peroxidase activity of the enzyme.

It carries out the reaction H2O2 + AH2 = A + 2 H2O. It catalyses the reaction 2 H2O2 = O2 + 2 H2O. Bifunctional enzyme with both catalase and broad-spectrum peroxidase activity. The polypeptide is Catalase-peroxidase (Aliarcobacter butzleri (strain RM4018) (Arcobacter butzleri)).